Reading from the N-terminus, the 342-residue chain is Phosphoribosylformylglycinamidine cyclo-ligase (342 aa).

Belongs to the AIR synthase family.

The protein localises to the cytoplasm. The enzyme catalyses 2-formamido-N(1)-(5-O-phospho-beta-D-ribosyl)acetamidine + ATP = 5-amino-1-(5-phospho-beta-D-ribosyl)imidazole + ADP + phosphate + H(+). The protein operates within purine metabolism; IMP biosynthesis via de novo pathway; 5-amino-1-(5-phospho-D-ribosyl)imidazole from N(2)-formyl-N(1)-(5-phospho-D-ribosyl)glycinamide: step 2/2. The sequence is that of Phosphoribosylformylglycinamidine cyclo-ligase from Gloeothece citriformis (strain PCC 7424) (Cyanothece sp. (strain PCC 7424)).